The sequence spans 346 residues: Cyclin-dependent kinase 7 (346 aa).

At alanine 2 the chain carries N-acetylalanine. A Phosphoserine modification is found at serine 7. The Protein kinase domain occupies tyrosine 12–phenylalanine 295. Residues leucine 18 to valine 26 and lysine 41 contribute to the ATP site. The active-site Proton acceptor is the aspartate 137. Position 164 is a phosphoserine; by CDK1 and CDK2 (serine 164). Threonine 170 carries the post-translational modification Phosphothreonine; by CDK2. At serine 321 the chain carries Phosphoserine.

It belongs to the protein kinase superfamily. CMGC Ser/Thr protein kinase family. CDC2/CDKX subfamily. Associates primarily with cyclin-H (CCNH) and MAT1 to form the CAK complex. CAK can further associate with the core-TFIIH to form the TFIIH basal transcription factor; this complex is sensitive to UV light. The CAK complex binds to p53/TP53 in response to DNA damage. Interacts with CDK2, SF1/NR5A1, PUF60 and PRKCI. Interacts with HINT1. Phosphorylation of Ser-164 during mitosis inactivates the enzyme. Phosphorylation of Thr-170 is required for activity. Phosphorylated at Ser-164 and Thr-170 by CDK2. In terms of tissue distribution, ubiquitous.

The protein resides in the nucleus. It is found in the cytoplasm. The protein localises to the perinuclear region. It carries out the reaction L-seryl-[protein] + ATP = O-phospho-L-seryl-[protein] + ADP + H(+). It catalyses the reaction L-threonyl-[protein] + ATP = O-phospho-L-threonyl-[protein] + ADP + H(+). The enzyme catalyses [DNA-directed RNA polymerase] + ATP = phospho-[DNA-directed RNA polymerase] + ADP + H(+). Inactivated by phosphorylation. Repressed by roscovitine (seliciclib, CYC202), R547 (Ro-4584820) and SNS-032 (BMS-387032). The association of p53/TP53 to the CAK complex in response to DNA damage reduces kinase activity toward CDK2 and RNA polymerase II repetitive C-terminal domain (CTD), thus stopping cell cycle progression. The inactivation by roscovitine promotes caspase-mediated apoptosis in leukemic cells. Specifically inactivated by THZ1. Its function is as follows. Serine/threonine kinase involved in cell cycle control and in RNA polymerase II-mediated RNA transcription. Cyclin-dependent kinases (CDKs) are activated by the binding to a cyclin and mediate the progression through the cell cycle. Each different complex controls a specific transition between 2 subsequent phases in the cell cycle. Required for both activation and complex formation of CDK1/cyclin-B during G2-M transition, and for activation of CDK2/cyclins during G1-S transition (but not complex formation). CDK7 is the catalytic subunit of the CDK-activating kinase (CAK) complex. Phosphorylates SPT5/SUPT5H, SF1/NR5A1, POLR2A, p53/TP53, CDK1, CDK2, CDK4, CDK6 and CDK11B/CDK11. Initiates transcription by RNA polymerase II by mediating phosphorylation of POLR2A at 'Ser-5' of the repetitive C-terminal domain (CTD) when POLR2A is in complex with DNA, promoting dissociation from DNA and initiation. CAK activates the cyclin-associated kinases CDK1, CDK2, CDK4 and CDK6 by threonine phosphorylation, thus regulating cell cycle progression. CAK complexed to the core-TFIIH basal transcription factor activates RNA polymerase II by serine phosphorylation of the CTD of POLR2A, allowing its escape from the promoter and elongation of the transcripts. Its expression and activity are constant throughout the cell cycle. Upon DNA damage, triggers p53/TP53 activation by phosphorylation, but is inactivated in turn by p53/TP53; this feedback loop may lead to an arrest of the cell cycle and of the transcription, helping in cell recovery, or to apoptosis. Required for DNA-bound peptides-mediated transcription and cellular growth inhibition. The polypeptide is Cyclin-dependent kinase 7 (CDK7) (Homo sapiens (Human)).